We begin with the raw amino-acid sequence, 93 residues long: Zinc metalloproteinase-disintegrin-like leucurogin (93 aa).

The Disintegrin domain occupies 8-93 (PPVCGNELLE…SECPADVGHK (86 aa)). Ca(2+) is bound by residues Val-10, Asn-13, Leu-15, Glu-17, Glu-20, and Asp-23. 7 disulfide bridges follow: Cys-11/Cys-40, Cys-22/Cys-35, Cys-24/Cys-30, Cys-34/Cys-57, Cys-48/Cys-54, Cys-53/Cys-79, and Cys-66/Cys-86. A D/ECD-tripeptide motif is present at residues 72 to 74 (ECD). The Ca(2+) site is built by Asp-74, Pro-75, Glu-77, Asp-89, and Val-90. Residues 74-93 (DPAEHCTGQSSECPADVGHK) are disordered.

Belongs to the venom metalloproteinase (M12B) family. P-III subfamily. Monomer. Zn(2+) is required as a cofactor. Post-translationally, N-glycosylated. In terms of tissue distribution, expressed by the venom gland.

The protein resides in the secreted. Functionally, snake venom zinc metalloprotease that possesses hemorrhagic activity. The disintegrin-like domain has been expressed and named leucurogin. This recombinant disintegrin is able to inhibit collagen-induced platelet aggregation but not ADP- or arachidonic acid-induced platelet aggregation. Furthermore, it inhibits the adhesion of human fibroblasts to collagen type I. It also reduces adhesion and migration of human fibroblasts and inhibits migration and proliferation of human and mouse melanoma cell lines (BLM, and B16-F10-Nex2). In vitro, it inhibits the vascular structures formation by endothelial cells. In addition, it inhibits the growth of experimental Ehrlich tumor and has anti-angiogenesis effect on the sponge implant model. In vivo, when intraperitoneally injected into mice, it inhibits lung metastasis of B16F10 Nex-2 cells. In the treatment of human melanoma, grafted intradermally in the nude mice flank, it inhibits tumor growth. This is Zinc metalloproteinase-disintegrin-like leucurogin from Bothrops leucurus (Whitetail lancehead).